A 413-amino-acid polypeptide reads, in one-letter code: Cell division protein FtsA (413 aa).

The protein belongs to the FtsA/MreB family. Self-interacts. Interacts with FtsZ.

It localises to the cell inner membrane. In terms of biological role, cell division protein that is involved in the assembly of the Z ring. May serve as a membrane anchor for the Z ring. The protein is Cell division protein FtsA of Borreliella burgdorferi (strain ATCC 35210 / DSM 4680 / CIP 102532 / B31) (Borrelia burgdorferi).